Here is a 248-residue protein sequence, read N- to C-terminus: Triosephosphate isomerase (248 aa).

9–11 (NWK) contributes to the substrate binding site. Residue His94 is the Electrophile of the active site. The Proton acceptor role is filled by Glu164. Substrate-binding positions include Gly170, Ser209, and 230–231 (GG).

It belongs to the triosephosphate isomerase family. In terms of assembly, homodimer.

Its subcellular location is the cytoplasm. It carries out the reaction D-glyceraldehyde 3-phosphate = dihydroxyacetone phosphate. Its pathway is carbohydrate biosynthesis; gluconeogenesis. It participates in carbohydrate degradation; glycolysis; D-glyceraldehyde 3-phosphate from glycerone phosphate: step 1/1. Involved in the gluconeogenesis. Catalyzes stereospecifically the conversion of dihydroxyacetone phosphate (DHAP) to D-glyceraldehyde-3-phosphate (G3P). In Hahella chejuensis (strain KCTC 2396), this protein is Triosephosphate isomerase.